A 188-amino-acid chain; its full sequence is Elongation factor P (188 aa).

It belongs to the elongation factor P family.

The protein resides in the cytoplasm. Its pathway is protein biosynthesis; polypeptide chain elongation. In terms of biological role, involved in peptide bond synthesis. Stimulates efficient translation and peptide-bond synthesis on native or reconstituted 70S ribosomes in vitro. Probably functions indirectly by altering the affinity of the ribosome for aminoacyl-tRNA, thus increasing their reactivity as acceptors for peptidyl transferase. The polypeptide is Elongation factor P (Rickettsia peacockii (strain Rustic)).